A 387-amino-acid chain; its full sequence is MSVIKMIDLDLAGKRVFIRADLNVPVKDGKVTSDARILASLPTIKHCLEAGAKVMVTSHLGRPTEGEYAEEFSLLPVVNYLNDALDCEVRLVKDYLDGVELNAGELVVLENVRFNKGEKKNEEALSKKYAALCDVFVMDAFGTAHRAQASTHGVGMFAPIACAGPLLADELEALGKAMDKPARPMVAIVGGSKVSTKLTVLESLSKIADQLVVGGGIANTFIAAAGHNVGKSLYEADLVETAKKLMEECAIPVATDVACAKAFDENAEAEIKHVSEVQDDDMIFDLGPNSTAELAEILKNAKTILWNGPVGVFEFKNFEAGTRGIAEAIAQSEGFSVAGGGDTLAAIDKFGIKADVSYISTGGGAFLEFVEGKKLPAVEMLEARAKA.

Residues 21-23 (DLN), arginine 36, 59-62 (HLGR), arginine 113, and arginine 146 contribute to the substrate site. Residues lysine 197, glutamate 314, and 340–343 (GGDT) each bind ATP.

Belongs to the phosphoglycerate kinase family. In terms of assembly, monomer.

The protein localises to the cytoplasm. It carries out the reaction (2R)-3-phosphoglycerate + ATP = (2R)-3-phospho-glyceroyl phosphate + ADP. It functions in the pathway carbohydrate degradation; glycolysis; pyruvate from D-glyceraldehyde 3-phosphate: step 2/5. This is Phosphoglycerate kinase (pgk) from Vibrio cholerae serotype O1 (strain ATCC 39541 / Classical Ogawa 395 / O395).